Consider the following 4830-residue polypeptide: MAATTLSRLPALHPYSAVAEPRTLDGTRCFKFMRKSCLEFVKSLVNDEKGEKLISSLAVFVGHLVGCDADEALFKVRFGDGQTRITSAGAVHAQVVDVEASSLPGIAFRFFPPQPTLPKTLDDDLVVTVNSNSDKDVEFVLEFAQTVPSEAGQGIFAYFCKQVLESTLTEDETPLSILNPSPVSKLPEHAQLHDSFLDQAEKFPDRMAVQFLERLDQEDMGQFSKLTYDELKRLATSLAVKLQATHAKTSKPQNRQVVVPMLLCPSLELYVSYLAILMAGFAFCPLPVDAPDARLISLLAQLDTTILLGANSSQPPQWMPASVEWINVTDTLAETDQFAKHLTPAKRMQECAYVLFTSGTTGTPKGVQISHYSASISIFSHAACLDPSLLQLSSNTPGSTFKWFQFASTVFDPSVMEIFVTLSSGGTLCSANRALTLSDLEKVVRLSGADIMMATPSVATLLNPERIPKLKFLWTMGECLNSTVIRRFAAENGRTTLANAYGPTEASVNCTLLQPFPADFRGSIIGAPLPSCSLAVLHDGGDSPSGEKRFQAAPRGVTGELVIGGSHVGIGYLDMPEATADAFTTFAPLGRVYRTRDRARVVWDRDGNPLIEILGRMNAEQVKLSGRRVELGEIDSILQSSHTIQNAASVIWRPPTSQLQSGGGERLVCCIVLAPSAQPQDAEADCKIIADAQLPPHMRPWRYIVLPGLPVTVSGKSDRKQLSKIVAELLSSSAEQGSTKERSSEQNQVNANEDPVTQALIEAICAVCQLDAKSVSMDGDLFELGMDSLSAMRLLQLLRQSKVTATAARQLQVAQILGAKACRDLIPLLSDTTVSRDAEENNVSYPNNTDWSTELRSFEDRCRRSALLGLDERTRMRVQKIFPTTATQSGMLTSFLTRPASIGSKRSYINHTVYHFSSVSEACKFFDAFRTVLQKHDIYRTVFVPVDDKLAPFAQCVLSPASDDDNVSAHTSSTAIDACLKQHLEQIDNAISLEQPPWHLGLLAPPQEDEVEQSVVVLSLMHAIFDGGSLDLLQQEVVSLLRDDALQTSLEVRCTELEATVQHHFTSDLESSRRFWHQRLEGVSRTRFPCANGYKATEQSALGHASEVTELYSRSSMDEIVKQARCQRTSALVLLQTAWNLVLAAYTEDESLNYITSGSVHSGRLDEQTQSCMAPTFNVIPFITRLDQGTGNSATLTSAQLLAEATQASTAGLSHLEIPLGALARSGGMPFDTLFAVQRFDAQTCSNATLPWASISYPVMANDFAVMVEVWPGSKATEKMRLRLTYSLAVLDAPSAQLLLQQYEDILHSLMREPETTTVQQLINGEGLRQSALSVCRGPLASENDDSQTEAQLLHSYFENKAATEPEAIALEFYFNQDSDTDGSMEVQRWTYFELNAQANRLARYLLSVTGKPTLRDLPIPICMERCPELYVGVLATLKAGGAWCPIDVQSPRARQLELIARTKSRVVLVTPNTSADLGEVQADGQPLTIKVNACDTSQFHHLSADNLRPTATPATLAYLIWTSGTTGAPKGVMIEHASAVASMQALQQHVKPLQQDMPPRCLQFSAYTFDVFVQDLFWTWGLGGAIIAATREIMLGSTAELIAASQTSHAHLTPAFAAGLRRDSCPSITSVTFIGEKLTESVAADWTSSCASIDKPNDSIAVYNTYGPAEVTVVATLRQLFGGEKLQSANVGVPMQGVTAIVCKNREQPIRPCAKGSIGELVLAGAQVGRGYLNDKAKTEAAFTYSPEWKQRLYYTGDYVRMLHDGSIEFIGRRDDLVKLGGIRVELSEISAALLSVQERRKQAAVVERVETMMLSRLDRPTKQVISFLACPYLAASTDRGVHGAISEPLLLTSGDAIQLAHQTLNNVRDVLPPYMVPSMVLVLSRIPQTASAKIDRAKLQAAYDSADLAQWVSLLSTTADDPDNPEGEDGDLQCQVIAAISEITGTSTQDINSSSSLVSIGLDSIRAIRLAAKLKQNGTPLPISTLLACSTVRMLIRGLATKTGDGHEVAEEDTRNRLLAVKLSEFDKNVREMLPTGSKQDFEVCIPCSTLQEGMLAETLADPAAYWSDHVLQLDSHIDLARLAEAWRRAAHNIEMLRTVFAVVSQTAGLEEVQFDKNTDVFALQMVHKSVDITLIDVCDPIRVKSDDRLHQAVSKWTRSVAQDRADNVFATPLWKVKTFVVQDDSSSGNDQVPLTYAALCIHHALYDGPSIDIILNRVRDEYSALSPDMLDDHHNIRLLPTTSLSTQSEFAYACVADEQRESILHWEQKLQPRGPAAMLPDLTSVKDLPSDAKSARFIAASRKLQCTSARPQGVGLSALIKSAFAIVLAQYVEAEDQRHVVLGEILSLRNLHATLSTEQGAVGPLLTTQPFSLLLDAALEQKSAASYLQSNVIVHPSMQHRFASLASLAKIMGTRSDQEMFTAMYVYHPRRQPVSVSTKPIWTLLEDRSSEIRVEHSTVLNVFEHDDVEDSLILELSMKEDRISKDMLETLLDQVVSLLTLLLDGAGETLQALLGKVGQDQRELASVSHVPRGSRHAGDGSEVDQGHDPLFWLQHYAKNHPSWLAVVIAAGTPETACINDAELSSWTYAQLNAKADQVARLIRSLDLPSEGPIALCMQRSLISIAVTVAIFKCGRTYLPIDDQLPTERKRLLISDSRCALVVTEGTCLGELEADCISSVLNVSKNDFEQSLAALSHRDDHTELTSIKPRADDGAYLLYTSGSTGKPKGVLVGRANLCSFIDSYAEVVSAECPSTLQLGGKGRYLGLAGRAFDVHLSQMFMSWRFGLALATGERPLLLGDLKATVQTMSITHMSCVPSLLDQCDLVPQEVPSLVFLGVGGEKLTDRVRDTLASSLTVLNAYGPTETTIMCTVNRVHPHSHVRDIGQVLPGNTAVVIDFDDKSRFAPVIRGRAGELCIRGDLVALGYHALDPSQMATSGFVTTPDGTRMYRTGDAARMMADGSLHYLGRRDEQEKIRGQRLELGEVSRCAIAGADESIQATTLICQHESLAKPLLITLIATKTSSTGDQRRDTLPQFLAPSTETGRLAQHVLQYCKQHLPSYMVPDLVVGVSHLTQLAASGKTDVRRLKAWLAAADPTQLFSFEGRGHANAQSGSESNVNRPLSSLEREIASAIRRMLPKCPAEIRPDTSIFDLGIDSLSVIRLAGQLRKEGLAISIGRLRMHPRVQDIAAELSDSKALEVDLSVGVKALESFQARHQDQVQASRVEKVTKVLPCLPSQEGMVAISLSSKDEPVYVARIAVRFNDIQPEATAFAAVSLRRAWRQLSERHSILRTCFDHVDDVTIAQIVLDAVDIQRHIVTTKTQNSTAAIARAILQDITVIPPWRIELDDEAGSEPTFVLHMHHALYDGHSLPLLLNDLARVIQSIDDDGPESHDQQPGVQEMLESILSVSEQRAERFWRNTFADFPVNDPSVWTSIASVQGRAPLRCKATVQLAPLEAAAKTLQVTLSSLVASALGIALCRSLETTAFTVGFVLWGRSLDHVSAESIVAPCLTTVPMPFALCADRGSRHVGELIRACHDWNSSCLAFQHTSMRQIRRWIGSECRGSLVDLLYSFVQAGASNSSELARTWHLDSVEAETDAPAAVEVTADRDRDELRISAMARHLLPHDGLEGMTENLQILLNKIANGTGTNMDLKAAGIPTSSVASKLARELPSHSAVSRPLTAAEEQIRDLAVTMCGVPNTEMLQLDTPFLRIGLDSIVALRFSARLRREHGLQLSAHDVLAAGTIAGLSKLLDQRQAEGRSDATVSSSLDSTAARYKATPLQAGMLNGTLASASHDLYVHHHAVLFKQPLDHDRLQRALQHVVASHDILRTSFHLEGEPSETKNAVNSLSWYAQVTPFESLRSATEIRVVRSDKTASAALKEYGTDFIFDGPEKFNVSPWCAAILHCTSSQDVLVISMHHSLYDGVSLPSMFADLRASYHDLTHELVQRPPFSKAADLIASSAHESEQYWLKTLIEFKQPSLLVKKSSRSSTTPSLYRLDERRLSVSLATLKRLSAELGATPQAIAMLSWSKVLAVAAGQRDVCFGQVVSGRYLNLPGIEDVSGPLINTVPIRINLIDDLASNAVTARDLQERIVAAQPFQHASLGRIQNAWRREHGAHSTFFDTLFVFHNIEGKSSSASSSKSELWTALDPSEGPIQTESSTSTVVTTAASEYPVNISVIQDDDGVQIKAGASDAVGGIDWLPKTLQLFEQVFLDLLERPHRSVGAFPERLAALPLTVGRDGTDKDTSASVGVDAGRRSLSTAEQDIVLRHMAKRLNVDAAIINSCPNLFLLGIDSLLAICISADARSEQVPLTPFDVLSAGTFARLTVATETRSEAPRIGVDDSTDTEREMLVGKEAEQEAIELLKVPSCEVETVLPLLTGQQQHIAQWLQRGRRFLEPTFVYACPSKLDVSKLKSAWNELRRRNAALRTAFVRLKDRRTLVQVVLAENSLVWRDHERGRLGVVDGSNNLDAAAFEAVQRLNASPTDLFRPSARLTLVQGKQSDLVLVTIHHTSYDAWSMRLMADELMQLYHNIDQGKLESMRAPVSFADFIDQTHREALRNRDATASFWETRLRGASATLVCRGATQSLEQTMHVRKPALQDVDTLEAACRARGFGLQVVVILAYARLLSSEVSDTKITSPTFGFYTAGRASAIDGVGNMIGPTTAMQPMTVATAGGDQEDLFERLRAIQTDLVSRAEHQQDYVDLPVAFDAHLNLLWHKPITTSMRPPTDDSNASAPSLLKPYRLPYDSGYFTRHPLMPGNTSVDGDIHEAGAQLYMDVGLDASTKSLSLGARCDRSAMDAQQLEAFCDRFVGELEKIRAAL.

The segment at 197–623 is adenylation 1; it reads LDQAEKFPDR…LGRMNAEQVK (427 aa). A Carrier 1 domain is found at 751-833; sequence ANEDPVTQAL…DLIPLLSDTT (83 aa). Serine 788 is modified (O-(pantetheine 4'-phosphoryl)serine). The tract at residues 879–1317 is condensation 1; the sequence is QKIFPTTATQ…HSLMREPETT (439 aa). An adenylation 2 region spans residues 1358–1781; it reads FENKAATEPE…IGRRDDLVKL (424 aa). The Carrier 2 domain maps to 1929-2005; the sequence is GEDGDLQCQV…MLIRGLATKT (77 aa). At serine 1966 the chain carries O-(pantetheine 4'-phosphoryl)serine. The interval 2048–2503 is condensation 2; the sequence is IPCSTLQEGM…LLDQVVSLLT (456 aa). The tract at residues 2573-2977 is adenylation 3; it reads AGTPETACIN…LGRRDEQEKI (405 aa). A Carrier 3 domain is found at 3122 to 3198; it reads RPLSSLEREI…DIAAELSDSK (77 aa). Position 3159 is an O-(pantetheine 4'-phosphoryl)serine (serine 3159). Residues 3232-3621 are condensation 3; sequence KVLPCLPSQE…RDRDELRISA (390 aa). One can recognise a Carrier 4 domain in the interval 3685 to 3760; that stretch reads TAAEEQIRDL…GLSKLLDQRQ (76 aa). Serine 3720 carries the O-(pantetheine 4'-phosphoryl)serine modification. The tract at residues 3779–4199 is condensation 4; the sequence is RYKATPLQAG…GVQIKAGASD (421 aa). The 77-residue stretch at 4264–4340 folds into the Carrier 5 domain; it reads SLSTAEQDIV…RLTVATETRS (77 aa). Serine 4301 is modified (O-(pantetheine 4'-phosphoryl)serine). The segment at 4381-4708 is condensation 5; sequence VLPLLTGQQQ…DLVSRAEHQQ (328 aa).

This sequence belongs to the NRP synthetase family.

It functions in the pathway siderophore biosynthesis. Its function is as follows. Nonribosomal peptide synthetase; part of the gene cluster that mediates the biosynthesis of siderophore ferrichrome A which is contributing to organismal virulence. The first step of ferrichrome A biosynthesis is performed by the HMG-CoA synthase hcs1 which catalyzes the generation of HMG-CoA and CoA using acetoacetyl-CoA and acetyl-CoA as substrates. The enoyl-CoA isomerase/hydratase fer4 then catalyzes the conversion of hcs1-produced HMG-CoA to methylglutaconyl-CoA. The acyltransferase fer5 then fuses the fer4-generated methylglutaconyl-CoA with sid1-generated hydroxyornithine to yield methylglutaconyl hydroxyornithine. Methylglutaconyl hydroxyornithine is then available for use by the NRPS fer3 to generate ferrichrome A. The chain is Siderophore peptide synthetase fer3 from Mycosarcoma maydis (Corn smut fungus).